The chain runs to 480 residues: Endothelial transcription factor GATA-2 (480 aa).

Position 73 is a phosphoserine (Ser-73). Arg-86 bears the Asymmetric dimethylarginine mark. The tract at residues 166–208 is disordered; it reads SGSHLFGFPPTPPKEVSPDPSTTGAASPASSSAGGSVARGEDK. The segment covering 183-201 has biased composition (low complexity); sequence PDPSTTGAASPASSSAGGS. Position 192 is a phosphoserine (Ser-192). GATA-type zinc fingers lie at residues 295-319 and 349-373; these read CVNC…CNAC and CANC…CNAC. Residue Lys-389 forms a Glycyl lysine isopeptide (Lys-Gly) (interchain with G-Cter in SUMO2) linkage. Residues 457–480 form a disordered region; sequence TPIHPSSSLSFGHPHPSSMVTAMG.

Interacts with BRD3. Interacts with AR and CCAR1. Interacts with MDFIC.

The protein localises to the nucleus. Transcriptional activator which regulates endothelin-1 gene expression in endothelial cells. Binds to the consensus sequence 5'-AGATAG-3'. This chain is Endothelial transcription factor GATA-2 (Gata2), found in Mus musculus (Mouse).